A 366-amino-acid polypeptide reads, in one-letter code: Chorismate synthase (366 aa).

NADP(+)-binding residues include Arg48 and Arg54. FMN is bound by residues 125-127 (RSS), 238-239 (NA), Gly278, 293-297 (KPTSS), and Arg319.

This sequence belongs to the chorismate synthase family. As to quaternary structure, homotetramer. The cofactor is FMNH2.

It carries out the reaction 5-O-(1-carboxyvinyl)-3-phosphoshikimate = chorismate + phosphate. It participates in metabolic intermediate biosynthesis; chorismate biosynthesis; chorismate from D-erythrose 4-phosphate and phosphoenolpyruvate: step 7/7. Its function is as follows. Catalyzes the anti-1,4-elimination of the C-3 phosphate and the C-6 proR hydrogen from 5-enolpyruvylshikimate-3-phosphate (EPSP) to yield chorismate, which is the branch point compound that serves as the starting substrate for the three terminal pathways of aromatic amino acid biosynthesis. This reaction introduces a second double bond into the aromatic ring system. This Chromobacterium violaceum (strain ATCC 12472 / DSM 30191 / JCM 1249 / CCUG 213 / NBRC 12614 / NCIMB 9131 / NCTC 9757 / MK) protein is Chorismate synthase.